The following is a 98-amino-acid chain: UPF0251 protein SO_0727 (98 aa).

Belongs to the UPF0251 family.

In Shewanella oneidensis (strain ATCC 700550 / JCM 31522 / CIP 106686 / LMG 19005 / NCIMB 14063 / MR-1), this protein is UPF0251 protein SO_0727.